A 159-amino-acid chain; its full sequence is Large ribosomal subunit protein uL11 (159 aa).

It belongs to the universal ribosomal protein uL11 family. In terms of assembly, part of the ribosomal stalk of the 50S ribosomal subunit. Interacts with L10 and the large rRNA to form the base of the stalk. L10 forms an elongated spine to which L12 dimers bind in a sequential fashion forming a multimeric L10(L12)X complex.

Functionally, forms part of the ribosomal stalk which helps the ribosome interact with GTP-bound translation factors. The sequence is that of Large ribosomal subunit protein uL11 from Methanococcus maripaludis (strain C6 / ATCC BAA-1332).